The primary structure comprises 958 residues: Isoleucine--tRNA ligase (958 aa).

Positions 1–32 are disordered; it reads MSDNQNKPGKPAAKPQSKYPVNMTDTPFPMRG. Residues 71–81 carry the 'HIGH' region motif; the sequence is PYANGDIHLGH. Glu590 is an L-isoleucyl-5'-AMP binding site. The 'KMSKS' region motif lies at 631–635; sequence KMSKS. Lys634 provides a ligand contact to ATP. Zn(2+) contacts are provided by Cys921, Cys924, Cys941, and Cys944.

It belongs to the class-I aminoacyl-tRNA synthetase family. IleS type 1 subfamily. In terms of assembly, monomer. Zn(2+) is required as a cofactor.

The protein localises to the cytoplasm. It catalyses the reaction tRNA(Ile) + L-isoleucine + ATP = L-isoleucyl-tRNA(Ile) + AMP + diphosphate. In terms of biological role, catalyzes the attachment of isoleucine to tRNA(Ile). As IleRS can inadvertently accommodate and process structurally similar amino acids such as valine, to avoid such errors it has two additional distinct tRNA(Ile)-dependent editing activities. One activity is designated as 'pretransfer' editing and involves the hydrolysis of activated Val-AMP. The other activity is designated 'posttransfer' editing and involves deacylation of mischarged Val-tRNA(Ile). The protein is Isoleucine--tRNA ligase of Janthinobacterium sp. (strain Marseille) (Minibacterium massiliensis).